The following is a 474-amino-acid chain: MLSVPDYEFWFVTGSQHLYGEEQLKSVAKDAQDIADKLNASGKLPYKVVFKDVMTTAESITNFMKEVNYNDKVAGVITWMHTFSPAKNWIRGTELLQKPLLHLATQYLNNIPYADIDFDYMNLNQSAHGDREYAYINARLQKHNKIVYGYWGDEDVQEQIARWEDVAVAYNESFKVKVARFGDTMRNVAVTEGDKVEAQIKMGWTVDYYGIGDLVEEINKVSDADVDKEYADLESRYEMVQGDNDADTYKHSVRVQLAQYLGIKRFLERGGYTAFTTNFEDLWGMEQLPGLASQLLIRDGYGFGAEGDWKTAALGRVMKIMSHNKQTAFMEDYTLDLRHGHEAILGSHMLEVDPSIASDKPRVEVHPLDIGGKDDPARLVFTGSEGEAIDVTVADFRDGFKMISYAVDANKPEAETPNLPVAKQLWTPKMGLKKGALEWMQAGGGHHTMLSFSLTEEQMEDYATMVGMTKAFLK.

Positions 306, 331, 348, and 447 each coordinate Mn(2+).

Belongs to the arabinose isomerase family. It depends on Mn(2+) as a cofactor.

It carries out the reaction beta-L-arabinopyranose = L-ribulose. It functions in the pathway carbohydrate degradation; L-arabinose degradation via L-ribulose; D-xylulose 5-phosphate from L-arabinose (bacterial route): step 1/3. Its function is as follows. Catalyzes the conversion of L-arabinose to L-ribulose. The sequence is that of L-arabinose isomerase from Lactiplantibacillus plantarum (strain ATCC BAA-793 / NCIMB 8826 / WCFS1) (Lactobacillus plantarum).